The sequence spans 162 residues: MTNASLDDLDRAILKLLKKDARLTIAEISNQLKKPESTVHFRIKKLQERGIIEKYTIIVGEPIKPRKLALVVLEIDMPIIEDFLERYIEYVTKTLSGFSEVLFVAKSGKEKIVALVGGESEESLLKFIEDNIESIPTLRNVMVFPISEIKKGDEIAGFLAEV.

Residues 6–71 (LDDLDRAILK…PIKPRKLALV (66 aa)) form the HTH asnC-type domain. The H-T-H motif DNA-binding region spans 25–44 (IAEISNQLKKPESTVHFRIK).

This is an uncharacterized protein from Pyrococcus abyssi (strain GE5 / Orsay).